We begin with the raw amino-acid sequence, 328 residues long: Serine/threonine-protein phosphatase PP2A-2 catalytic subunit (328 aa).

The Mn(2+) site is built by Asp76, His78, Asp104, and Asn136. The active-site Proton donor is His137. Mn(2+) contacts are provided by His186 and His260. At Leu328 the chain carries Leucine methyl ester.

This sequence belongs to the PPP phosphatase family. PP-2A subfamily. Mn(2+) serves as cofactor.

It carries out the reaction O-phospho-L-seryl-[protein] + H2O = L-seryl-[protein] + phosphate. It catalyses the reaction O-phospho-L-threonyl-[protein] + H2O = L-threonyl-[protein] + phosphate. This Blumeria hordei (Barley powdery mildew) protein is Serine/threonine-protein phosphatase PP2A-2 catalytic subunit (PP2A-2).